The primary structure comprises 535 residues: MTEKFLFLYLSLLPMPLLSQAQWNENSLVSFSKIIASGNHLSNCWICHNFITRSSSYQYILVRNFSLNLTFGSGIPEGQHKSVPLQVSLANSAHQVPCLDLTPPFNQSSKTSFYFYNCSSLNQTCCPCPEGHCDRKNTSEEGFPSPTIHPMSFSPAGCHPNLTHWCPAKQMNDYRDKSPQNRCAAWEGKELITWRVLYSLPKAHTVPTWPKSTVPLGGPLSPACNQTIPAGWKSQLHKWFDSHIPRWACTPPGYVFLCGPQKNKLPFDGSPKITYSTPPVANLYTCINNIQHTGECAVGLLGPRGIGVTIYNTTQPRQKRALGLILAGMGAAIGMIAPWGGFTYHDVTLRNLSRQIDNIAKSTRDSISKLKASIDSLANVVMDNRLALDYLLAEQGGVCAVINKSCCVYVNNSGAIEEDIKKIYDEATWLHDFGKGGASARAIWEAVKSALPSLNWFVPLLGPATVILLLFLFGPCFFNLLIKCVSSRIKQFHMKSPQMERYQLSVIGGPSTYKHISPLDASGQRFRETMEEFSL.

The first 21 residues, 1-21 (MTEKFLFLYLSLLPMPLLSQA), serve as a signal peptide directing secretion. The Extracellular portion of the chain corresponds to 22–321 (QWNENSLVSF…NTTQPRQKRA (300 aa)). A glycan (N-linked (GlcNAc...) asparagine) is linked at Asn68. Residues 322–342 (LGLILAGMGAAIGMIAPWGGF) traverse the membrane as a helical segment. Residues 343–456 (TYHDVTLRNL…VKSALPSLNW (114 aa)) lie on the Cytoplasmic side of the membrane. A helical transmembrane segment spans residues 457 to 477 (FVPLLGPATVILLLFLFGPCF). The Extracellular portion of the chain corresponds to 478–535 (FNLLIKCVSSRIKQFHMKSPQMERYQLSVIGGPSTYKHISPLDASGQRFRETMEEFSL).

The protein belongs to the gamma type-C retroviral envelope protein family. As to expression, expressed in placenta.

The protein resides in the membrane. The sequence is that of Endogenous retrovirus group V member 2 Env polyprotein (ERVV-2) from Homo sapiens (Human).